The following is a 195-amino-acid chain: Elongation factor P (195 aa).

The protein belongs to the elongation factor P family.

Its subcellular location is the cytoplasm. It participates in protein biosynthesis; polypeptide chain elongation. Involved in peptide bond synthesis. Stimulates efficient translation and peptide-bond synthesis on native or reconstituted 70S ribosomes in vitro. Probably functions indirectly by altering the affinity of the ribosome for aminoacyl-tRNA, thus increasing their reactivity as acceptors for peptidyl transferase. The sequence is that of Elongation factor P from Rhodopirellula baltica (strain DSM 10527 / NCIMB 13988 / SH1).